We begin with the raw amino-acid sequence, 941 residues long: MASPRSSGQPGPPPPPPPPPARLLLLLLLPLLLPLAPGAWGWARGAPRPPPSSPPLSIMGLMPLTKEVAKGSIGRGVLPAVELAIEQIRNESLLRPYFLDLRLYDTECDNAKGLKAFYDAIKYGPNHLMVFGGVCPSVTSIIAESLQGWNLVQLSFAATTPVLADKKKYPYFFRTVPSDNAVNPAILKLLKHYQWKRVGTLTQDVQRFSEVRNDLTGVLYGEDIEISDTESFSNDPCTSVKKLKGNDVRIILGQFDQNMAAKVFCCAYEENMYGSKYQWIIPGWYEPSWWEQVHTEANSSRCLRKNLLAAMEGYIGVDFEPLSSKQIKTISGKTPQQYEREYNNKRSGVGPSKFHGYAYDGIWVIAKTLQRAMETLHASSRHQRIQDFNYTDHTLGRIILNAMNETNFFGVTGQVVFRNGERMGTIKFTQFQDSREVKVGEYNAVADTLEIINDTIRFQGSEPPKDKTIILEQLRKISLPLYSILSALTILGMIMASAFLFFNIKNRNQKLIKMSSPYMNNLIILGGMLSYASIFLFGLDGSFVSEKTFETLCTVRTWILTVGYTTAFGAMFAKTWRVHAIFKNVKMKKKIIKDQKLLVIVGGMLLIDLCILICWQAVDPLRRTVEKYSMEPDPAGRDISIRPLLEHCENTHMTIWLGIVYAYKGLLMLFGCFLAWETRNVSIPALNDSKYIGMSVYNVGIMCIIGAAVSFLTRDQPNVQFCIVALVIIFCSTITLCLVFVPKLITLRTNPDAATQNRRFQFTQNQKKEDSKTSTSVTSVNQASTSRLEGLQSENHRLRMKITELDKDLEEVTMQLQDTPEKTTYIKQNHYQELNDILNLGNFTESTDGGKAILKNHLDQNPQLQWNTTEPSRTCKDPIEDINSPEHIQRRLSLQLPILHHAYLPSIGGVDASCVSPCVSPTASPRHRHVPPSFRVMVSGL.

Residues 1–41 (MASPRSSGQPGPPPPPPPPPARLLLLLLLPLLLPLAPGAWG) form the signal peptide. Residues 42–483 (WARGAPRPPP…LRKISLPLYS (442 aa)) are Extracellular-facing. Asn-90 carries N-linked (GlcNAc...) asparagine glycosylation. 3 cysteine pairs are disulfide-bonded: Cys-108/Cys-135, Cys-237/Cys-266, and Cys-265/Cys-302. Asn-298, Asn-389, Asn-404, and Asn-453 each carry an N-linked (GlcNAc...) asparagine glycan. Residues 484–504 (ILSALTILGMIMASAFLFFNI) form a helical membrane-spanning segment. The Cytoplasmic segment spans residues 505–522 (KNRNQKLIKMSSPYMNNL). A helical transmembrane segment spans residues 523–543 (IILGGMLSYASIFLFGLDGSF). Residues 544–551 (VSEKTFET) are Extracellular-facing. Residues 552-572 (LCTVRTWILTVGYTTAFGAMF) traverse the membrane as a helical segment. The Cytoplasmic segment spans residues 573 to 597 (AKTWRVHAIFKNVKMKKKIIKDQKL). The chain crosses the membrane as a helical span at residues 598–618 (LVIVGGMLLIDLCILICWQAV). Over 619 to 654 (DPLRRTVEKYSMEPDPAGRDISIRPLLEHCENTHMT) the chain is Extracellular. Residues 655-675 (IWLGIVYAYKGLLMLFGCFLA) traverse the membrane as a helical segment. Residues 676–691 (WETRNVSIPALNDSKY) lie on the Cytoplasmic side of the membrane. The chain crosses the membrane as a helical span at residues 692–712 (IGMSVYNVGIMCIIGAAVSFL). At 713 to 720 (TRDQPNVQ) the chain is on the extracellular side. A helical membrane pass occupies residues 721–741 (FCIVALVIIFCSTITLCLVFV). Residues 742–941 (PKLITLRTNP…PSFRVMVSGL (200 aa)) lie on the Cytoplasmic side of the membrane. The interval 763–790 (TQNQKKEDSKTSTSVTSVNQASTSRLEG) is disordered. Polar residues predominate over residues 773–787 (TSTSVTSVNQASTSR). A phosphoserine mark is found at Ser-776 and Ser-779. The stretch at 781 to 819 (NQASTSRLEGLQSENHRLRMKITELDKDLEEVTMQLQDT) forms a coiled coil. Thr-819 is modified (phosphothreonine). Phosphoserine is present on residues Ser-884, Ser-893, Ser-913, Ser-916, Ser-920, and Ser-924.

The protein belongs to the G-protein coupled receptor 3 family. GABA-B receptor subfamily. As to quaternary structure, heterodimer of GABBR1 and GABBR2. Homodimers may form, but are inactive. Interacts (via C-terminus) with ATF4 (via leucine zipper domain). As to expression, highly expressed in brain, especially in cerebral cortex, thalamus, hippocampus, frontal, occipital and temporal lobe, occipital pole and cerebellum, followed by corpus callosum, caudate nucleus, spinal cord, amygdala and medulla. Weakly expressed in heart, testis and skeletal muscle.

It localises to the cell membrane. The protein resides in the postsynaptic cell membrane. Component of a heterodimeric G-protein coupled receptor for GABA, formed by GABBR1 and GABBR2. Within the heterodimeric GABA receptor, only GABBR1 seems to bind agonists, while GABBR2 mediates coupling to G proteins. Ligand binding causes a conformation change that triggers signaling via guanine nucleotide-binding proteins (G proteins) and modulates the activity of down-stream effectors, such as adenylate cyclase. Signaling inhibits adenylate cyclase, stimulates phospholipase A2, activates potassium channels, inactivates voltage-dependent calcium-channels and modulates inositol phospholipid hydrolysis. Plays a critical role in the fine-tuning of inhibitory synaptic transmission. Pre-synaptic GABA receptor inhibits neurotransmitter release by down-regulating high-voltage activated calcium channels, whereas postsynaptic GABA receptor decreases neuronal excitability by activating a prominent inwardly rectifying potassium (Kir) conductance that underlies the late inhibitory postsynaptic potentials. Not only implicated in synaptic inhibition but also in hippocampal long-term potentiation, slow wave sleep, muscle relaxation and antinociception. This is Gamma-aminobutyric acid type B receptor subunit 2 (GABBR2) from Homo sapiens (Human).